The primary structure comprises 148 residues: MKVVLLQDVKGLGKKDSIVEVNDGYARNYLIPRKLAAPLTEGLEKHIKEKKEAEQKKKEKELMLAKDLADKLEKSQVIIKAKAGENGKLFGSITNKEIADEIKRQLGIDMDKKKIELEDPIKQIGSYEVSIRLYQGIVAKLKVHVTSS.

Belongs to the bacterial ribosomal protein bL9 family.

Binds to the 23S rRNA. This chain is Large ribosomal subunit protein bL9, found in Caldicellulosiruptor saccharolyticus (strain ATCC 43494 / DSM 8903 / Tp8T 6331).